A 288-amino-acid chain; its full sequence is uncharacterized protein (288 aa).

Residues 6–20 (GFIG…MASH) and T97 each bind NAD(+). The active site involves K172. K240 lines the NAD(+) pocket.

This sequence belongs to the HIBADH-related family.

It is found in the cell membrane. It localises to the membrane raft. This is an uncharacterized protein from Bacillus subtilis (strain 168).